A 277-amino-acid polypeptide reads, in one-letter code: Thymidylate synthase (277 aa).

Residues Arg27 and 132–133 (RR) contribute to the dUMP site. The Nucleophile role is filled by Cys152. DUMP is bound by residues 179 to 182 (RSAD), Asn190, and 220 to 222 (HVY). Position 182 (Asp182) interacts with (6R)-5,10-methylene-5,6,7,8-tetrahydrofolate. Ala276 provides a ligand contact to (6R)-5,10-methylene-5,6,7,8-tetrahydrofolate.

Belongs to the thymidylate synthase family. Bacterial-type ThyA subfamily. As to quaternary structure, homodimer.

The protein localises to the cytoplasm. The catalysed reaction is dUMP + (6R)-5,10-methylene-5,6,7,8-tetrahydrofolate = 7,8-dihydrofolate + dTMP. The protein operates within pyrimidine metabolism; dTTP biosynthesis. In terms of biological role, catalyzes the reductive methylation of 2'-deoxyuridine-5'-monophosphate (dUMP) to 2'-deoxythymidine-5'-monophosphate (dTMP) while utilizing 5,10-methylenetetrahydrofolate (mTHF) as the methyl donor and reductant in the reaction, yielding dihydrofolate (DHF) as a by-product. This enzymatic reaction provides an intracellular de novo source of dTMP, an essential precursor for DNA biosynthesis. In Albidiferax ferrireducens (strain ATCC BAA-621 / DSM 15236 / T118) (Rhodoferax ferrireducens), this protein is Thymidylate synthase.